An 887-amino-acid chain; its full sequence is Alpha-amylase 3, chloroplastic (887 aa).

The N-terminal 55 residues, 1–55 (MSTVPIESLLHHSYLRHNSKVNRGNRSFIPISLNLRSHFTSNKLLHSIGKSVGVS), are a transit peptide targeting the chloroplast. Cysteines 499 and 587 form a disulfide. Residues 545-546 (YM) and 664-669 (RLDFVR) contribute to the substrate site. Asp666 serves as the catalytic Nucleophile. Glu691 functions as the Proton donor in the catalytic mechanism. Substrate is bound by residues Trp693, Ser695, Gln712, Lys754, 760–762 (GWW), His773, Gln779, Lys857, and Trp884.

It belongs to the glycosyl hydrolase 13 family. The cofactor is Ca(2+). In terms of tissue distribution, expressed in developing siliques.

The protein resides in the plastid. Its subcellular location is the chloroplast. It catalyses the reaction Endohydrolysis of (1-&gt;4)-alpha-D-glucosidic linkages in polysaccharides containing three or more (1-&gt;4)-alpha-linked D-glucose units.. With respect to regulation, redox-regulated, with the highest activity under reducing conditions. The midpoint redox potential is -329 mV. The disulfide bridge between Cys-499 and Cys-587 inhibits catalysis. Inhibited by CuCl(2) and H(2)O(2). Possesses endoamylolytic activity in vitro, but seems not required for breakdown of transitory starch in leaves. May be involved in the determination of the final structure of glucans by shortening long linear phospho-oligosaccharides in the chloroplast stroma. Can act on both soluble and insoluble glucan substrates to release small linear and branched malto-oligosaccharides. Works synergistically with beta-amylase toward efficient starch degradation. Has activity against p-nitrophenyl maltoheptaoside (BPNP-G7), amylopectin and beta-limit dextrin. Involved in stress-induced starch degradation. This Arabidopsis thaliana (Mouse-ear cress) protein is Alpha-amylase 3, chloroplastic.